The sequence spans 181 residues: Oligoribonuclease (181 aa).

The region spanning 8–171 (LIWIDLEMTG…DDIRESVAEL (164 aa)) is the Exonuclease domain. Tyrosine 129 is a catalytic residue.

It belongs to the oligoribonuclease family.

It localises to the cytoplasm. Its function is as follows. 3'-to-5' exoribonuclease specific for small oligoribonucleotides. This chain is Oligoribonuclease, found in Salmonella choleraesuis (strain SC-B67).